The following is a 247-amino-acid chain: MSAAQSAVRSHAEAVQVSRTIDWMALFVVFFVIVGSYHIHAMLTMGDWDFWSDWKDRRLWVTVTPIVLVTFPAAVQSYLWERYRLPWGATVCVLGLLLGEWINRYFNFWGWTYFPINFVFPASLVPGAIILDTVLMLSGSYLFTAIVGAMGWGLIFYPGNWPIIAPLHVPVEYNGMLMSIADIQGYNYVRTGTPEYIRMVEKGTLRTFGKDVAPVSAFFSAFMSILIYFMWHFIGRWFSNERFLQST.

Helical transmembrane passes span W23–L43, L59–L79, P86–F106, W111–L131, A145–A165, and V215–G235.

In terms of assembly, m.capsulatus has two forms of methane monooxygenase, a soluble (sMMO) and a membrane-bound (particulate) type (pMMO). The particulate type is a nonamer composed of three alpha:beta:gamma heterotrimeric protomers assembled into a cylindrical structure; the beta and gamma subunits comprise the bulk of the membrane-spanning regions and the soluble regions are derived primarily from alpha subunits which form two antiparallel beta-barrel-like structures each. This assembly, also called pMMO hydroxylase (pMMO-H), is proposed to associate with methanol dehydrogenase (MDH), also designated as pMMO-R, to form the pMMO-C complex which seems to have greater methane monooxygenase activity.

It is found in the membrane. It carries out the reaction methane + a quinol + O2 = methanol + a quinone + H2O. In terms of biological role, non-catalytic subunit of the methane monooxygenase that is responsible for the initial oxygenation of methane to methanol in methanotrophs. At least in vitro, specific quinols can replace NADH as reductants. The protein is Particulate methane monooxygenase beta subunit (pmoA1) of Methylococcus capsulatus (strain ATCC 33009 / NCIMB 11132 / Bath).